A 421-amino-acid polypeptide reads, in one-letter code: DNA (cytosine-5)-methyltransferase 3-like (421 aa).

Over residues 1 to 14 the composition is skewed to polar residues; it reads MGSRETPSSCSKTL. The disordered stretch occupies residues 1–39; that stretch reads MGSRETPSSCSKTLETLDLETSDSSSPDADSPLEEQWLK. An ADD domain is found at 75 to 207; that stretch reads EVKVNRRSIE…LKAFHDQEGA (133 aa). A GATA-type; atypical zinc finger spans residues 86 to 116; sequence ICLCCGTLQVYTRHPLFEGGLCAPCKDKFLE. Residues 127-183 form a PHD-type; atypical zinc finger; sequence QSYCTICCSGGTLFICESPDCTRCYCFECVDILVGPGTSERINAMACWVCFLCLPFS.

In terms of assembly, homodimer. Heterotetramer composed of 1 DNMT3A homodimer and 2 DNMT3L subunits (DNMT3L-DNMT3A-DNMT3A-DNMT3L). Interacts with histone H3 (via N-terminus); interaction is strongly inhibited by methylation at lysine 4 (H3K4me). Interacts with EZH2; the interaction is direct. Interacts with SPOCD1. Expressed in testis, thymus, ovary, and heart.

It localises to the nucleus. Its function is as follows. Catalytically inactive regulatory factor of DNA methyltransferases that can either promote or inhibit DNA methylation depending on the context. Essential for the function of DNMT3A and DNMT3B: activates DNMT3A and DNMT3B by binding to their catalytic domain. Acts by accelerating the binding of DNA and S-adenosyl-L-methionine (AdoMet) to the methyltransferases and dissociates from the complex after DNA binding to the methyltransferases. Recognizes unmethylated histone H3 lysine 4 (H3K4me0) and induces de novo DNA methylation by recruitment or activation of DNMT3. Plays a key role in embryonic stem cells and germ cells. In germ cells, required for the methylation of imprinted loci together with DNMT3A. In male germ cells, specifically required to methylate retrotransposons, preventing their mobilization. Plays a key role in embryonic stem cells (ESCs) by acting both as an positive and negative regulator of DNA methylation. While it promotes DNA methylation of housekeeping genes together with DNMT3A and DNMT3B, it also acts as an inhibitor of DNA methylation at the promoter of bivalent genes. Interacts with the EZH2 component of the PRC2/EED-EZH2 complex, preventing interaction of DNMT3A and DNMT3B with the PRC2/EED-EZH2 complex, leading to maintain low methylation levels at the promoters of bivalent genes. Promotes differentiation of ESCs into primordial germ cells by inhibiting DNA methylation at the promoter of RHOX5, thereby activating its expression. This chain is DNA (cytosine-5)-methyltransferase 3-like (Dnmt3l), found in Mus musculus (Mouse).